Reading from the N-terminus, the 128-residue chain is Small ribosomal subunit protein eS8 (128 aa).

Positions 1–41 (MSYYQGNDSRKITGGQKGKNRDKRKYELGSPPTETKISDKD) are disordered.

Belongs to the eukaryotic ribosomal protein eS8 family. As to quaternary structure, part of the 30S ribosomal subunit.

The chain is Small ribosomal subunit protein eS8 from Sulfolobus acidocaldarius (strain ATCC 33909 / DSM 639 / JCM 8929 / NBRC 15157 / NCIMB 11770).